Reading from the N-terminus, the 101-residue chain is Protein RnfH (101 aa).

The protein belongs to the UPF0125 (RnfH) family.

The polypeptide is Protein RnfH (Coxiella burnetii (strain CbuG_Q212) (Coxiella burnetii (strain Q212))).